A 51-amino-acid polypeptide reads, in one-letter code: Large ribosomal subunit protein eL39 (51 aa).

The protein belongs to the eukaryotic ribosomal protein eL39 family.

The protein is Large ribosomal subunit protein eL39 of Saccharolobus islandicus (strain L.S.2.15 / Lassen #1) (Sulfolobus islandicus).